The primary structure comprises 145 residues: Large ribosomal subunit protein bL35c (145 aa).

A chloroplast-targeting transit peptide spans 1-56 (MASLSMASVNVSFCHPLRSSSPKVSLRSSVHFATSLSSSHSISGLRAVLPLKISTV).

Belongs to the bacterial ribosomal protein bL35 family. Part of the 50S ribosomal subunit.

The protein localises to the plastid. It is found in the chloroplast. The polypeptide is Large ribosomal subunit protein bL35c (Arabidopsis thaliana (Mouse-ear cress)).